A 113-amino-acid chain; its full sequence is U11-theraphotoxin-Hhn1a (113 aa).

The signal sequence occupies residues 1–21 (MNTVRVAFLLVFVLAVSLGQA). A propeptide spanning residues 22-74 (DKDENRMEMQEKTEQGKSYLDFAENLLLQKLEELEAKLLEEDSEESRNSRQKR) is cleaved from the precursor. The tract at residues 61-83 (EEDSEESRNSRQKRCIGEGVPCD) is disordered. Intrachain disulfides connect Cys-75–Cys-90, Cys-82–Cys-95, and Cys-89–Cys-110.

Belongs to the neurotoxin 14 (magi-1) family. 01 (HNTX-16) subfamily. Expressed by the venom gland.

It is found in the secreted. Its function is as follows. Probable ion channel inhibitor. The chain is U11-theraphotoxin-Hhn1a from Cyriopagopus hainanus (Chinese bird spider).